The following is a 220-amino-acid chain: MRMLEKGKLIVASHNAGKLREFDGLIGPFGFEVSSVAALGLPEPDETGTTFEENAYIKALAAAKATGFPALSDDSGLMVDALDGEPGVYTANWAETEDGKRDFDMAMQKVENLLQEKGATTPDKRKARFVSVICLAWPDGEAEYFRGEVEGTLVWPPRGNIGFGYDPVFLPDGYGKTFGEMTAEEKHGWKPGDASALSHRARAFKLFAEKALNVVSAPAE.

13 to 18 (SHNAGK) lines the substrate pocket. 2 residues coordinate Mg(2+): Asp45 and Asp74. Catalysis depends on Asp74, which acts as the Proton acceptor. Residues Ser75, 163 to 166 (FGYD), Lys186, and 199 to 200 (HR) each bind substrate.

It belongs to the HAM1 NTPase family. As to quaternary structure, homodimer. It depends on Mg(2+) as a cofactor.

The enzyme catalyses XTP + H2O = XMP + diphosphate + H(+). It catalyses the reaction dITP + H2O = dIMP + diphosphate + H(+). It carries out the reaction ITP + H2O = IMP + diphosphate + H(+). Its function is as follows. Pyrophosphatase that catalyzes the hydrolysis of nucleoside triphosphates to their monophosphate derivatives, with a high preference for the non-canonical purine nucleotides XTP (xanthosine triphosphate), dITP (deoxyinosine triphosphate) and ITP. Seems to function as a house-cleaning enzyme that removes non-canonical purine nucleotides from the nucleotide pool, thus preventing their incorporation into DNA/RNA and avoiding chromosomal lesions. The sequence is that of dITP/XTP pyrophosphatase from Brucella melitensis biotype 1 (strain ATCC 23456 / CCUG 17765 / NCTC 10094 / 16M).